Reading from the N-terminus, the 83-residue chain is Translational regulator CsrA (83 aa).

This sequence belongs to the CsrA/RsmA family. As to quaternary structure, homodimer; the beta-strands of each monomer intercalate to form a hydrophobic core, while the alpha-helices form wings that extend away from the core.

It is found in the cytoplasm. Its function is as follows. A translational regulator that binds mRNA to regulate translation initiation and/or mRNA stability. Usually binds in the 5'-UTR at or near the Shine-Dalgarno sequence preventing ribosome-binding, thus repressing translation. Its main target seems to be the major flagellin gene, while its function is anatagonized by FliW. This Nocardioides sp. (strain ATCC BAA-499 / JS614) protein is Translational regulator CsrA.